The chain runs to 293 residues: Histamine N-methyltransferase (293 aa).

Glu-28 contributes to the substrate binding site. S-adenosyl-L-methionine contacts are provided by Gly-60, Glu-89, Gln-94, Ser-120, and Ile-142. Asn-283 lines the substrate pocket.

Belongs to the class I-like SAM-binding methyltransferase superfamily. HNMT family. In terms of assembly, monomer.

Its subcellular location is the cytoplasm. The enzyme catalyses histamine + S-adenosyl-L-methionine = N(tau)-methylhistamine + S-adenosyl-L-homocysteine + H(+). Inactivates histamine by N-methylation. Plays an important role in degrading histamine and in regulating the airway response to histamine. This Xenopus tropicalis (Western clawed frog) protein is Histamine N-methyltransferase (hnmt).